Here is a 661-residue protein sequence, read N- to C-terminus: Ubiquitin-associated and SH3 domain-containing protein A (661 aa).

The UBA domain maps to 15 to 60; the sequence is KLKSRSSPSLLEPLLAMGFPVHTALKALAATGRKTAEEALAWLHDH. Residues 276-341 enclose the SH3 domain; sequence VHYQTLRALF…PENYTDRASE (66 aa). The tract at residues 395–661 is phosphatase-like; sequence RKSVLVVRHG…FNWRNWISGN (267 aa).

Homodimer or homooligomer. Interacts with CBL. Part of a complex containing CBL and activated EGFR. Interacts with ubiquitin and with mono-ubiquitinated proteins. Interacts with dynamin. In terms of tissue distribution, highest expression of UBASH3A in tissues belonging to the immune system, including spleen, peripheral blood leukocytes, thymus and bone marrow.

It is found in the cytoplasm. Its subcellular location is the nucleus. Functionally, interferes with CBL-mediated down-regulation and degradation of receptor-type tyrosine kinases. Promotes accumulation of activated target receptors, such as T-cell receptors, EGFR and PDGFRB, on the cell surface. Exhibits negligible protein tyrosine phosphatase activity at neutral pH. May act as a dominant-negative regulator of UBASH3B-dependent dephosphorylation. May inhibit dynamin-dependent endocytic pathways by functionally sequestering dynamin via its SH3 domain. This is Ubiquitin-associated and SH3 domain-containing protein A (UBASH3A) from Homo sapiens (Human).